The sequence spans 193 residues: Holliday junction branch migration complex subunit RuvA (193 aa).

The tract at residues 1–63 (MYAYLKGKIM…EDAQLLYGFK (63 aa)) is domain I. Positions 64-141 (DEEEKAMFNA…TITDESELFK (78 aa)) are domain II. A flexible linker region spans residues 141–142 (KE). The interval 143-193 (VNDTLLNEALLAFEALGYSKREITKIEKELKKKQFSTVDEYVKQGLQMFVS) is domain III.

This sequence belongs to the RuvA family. As to quaternary structure, homotetramer. Forms an RuvA(8)-RuvB(12)-Holliday junction (HJ) complex. HJ DNA is sandwiched between 2 RuvA tetramers; dsDNA enters through RuvA and exits via RuvB. An RuvB hexamer assembles on each DNA strand where it exits the tetramer. Each RuvB hexamer is contacted by two RuvA subunits (via domain III) on 2 adjacent RuvB subunits; this complex drives branch migration. In the full resolvosome a probable DNA-RuvA(4)-RuvB(12)-RuvC(2) complex forms which resolves the HJ.

It localises to the cytoplasm. The RuvA-RuvB-RuvC complex processes Holliday junction (HJ) DNA during genetic recombination and DNA repair, while the RuvA-RuvB complex plays an important role in the rescue of blocked DNA replication forks via replication fork reversal (RFR). RuvA specifically binds to HJ cruciform DNA, conferring on it an open structure. The RuvB hexamer acts as an ATP-dependent pump, pulling dsDNA into and through the RuvAB complex. HJ branch migration allows RuvC to scan DNA until it finds its consensus sequence, where it cleaves and resolves the cruciform DNA. The chain is Holliday junction branch migration complex subunit RuvA from Macrococcus caseolyticus (strain JCSC5402) (Macrococcoides caseolyticum).